Consider the following 437-residue polypeptide: Phosphomethylpyrimidine synthase (437 aa).

Substrate-binding positions include N69, M98, Y127, H163, 185–187 (SRG), 226–229 (DACR), and E265. Zn(2+) is bound at residue H269. Residue Y292 participates in substrate binding. Zn(2+) is bound at residue H333. Positions 409, 412, and 416 each coordinate [4Fe-4S] cluster.

This sequence belongs to the ThiC family. [4Fe-4S] cluster is required as a cofactor.

It catalyses the reaction 5-amino-1-(5-phospho-beta-D-ribosyl)imidazole + S-adenosyl-L-methionine = 4-amino-2-methyl-5-(phosphooxymethyl)pyrimidine + CO + 5'-deoxyadenosine + formate + L-methionine + 3 H(+). It participates in cofactor biosynthesis; thiamine diphosphate biosynthesis. In terms of biological role, catalyzes the synthesis of the hydroxymethylpyrimidine phosphate (HMP-P) moiety of thiamine from aminoimidazole ribotide (AIR) in a radical S-adenosyl-L-methionine (SAM)-dependent reaction. The polypeptide is Phosphomethylpyrimidine synthase (Clostridium botulinum (strain Langeland / NCTC 10281 / Type F)).